We begin with the raw amino-acid sequence, 357 residues long: MAKKPSLSPEEMRREALETALSTIERKYGLGAVMKLSDEAHVAIPVIPTGSIGLDLALGVGGVPRGRVTEIYGPESSGKTTLTLHIIAEAQKRGGTAAFIDAEHALDVAYARRLGVNTEELLISQPDFGEQALDIADMLVRSAAVDLVVIDSVAALIPQAELEGSMGDTQVGGQARLMSHALRKLTGTIHKSRTAVIFINQIRMKIGTMGYGSPETTTGGNALKFYSSVRMDIRKIQTLKDKEEVYGSRTRVKIVKNKVAPPFREALFDILYGTGISRTGEIIDLGSDAGIIDKSGSWFAFGSERLGQGKENVRALLEENAPLREAIEAKLIEHLGMTPTKFASSGEEPANDEENDL.

Residue G73 to T80 participates in ATP binding.

This sequence belongs to the RecA family.

The protein resides in the cytoplasm. Can catalyze the hydrolysis of ATP in the presence of single-stranded DNA, the ATP-dependent uptake of single-stranded DNA by duplex DNA, and the ATP-dependent hybridization of homologous single-stranded DNAs. It interacts with LexA causing its activation and leading to its autocatalytic cleavage. The sequence is that of Protein RecA from Nitratidesulfovibrio vulgaris (strain ATCC 29579 / DSM 644 / CCUG 34227 / NCIMB 8303 / VKM B-1760 / Hildenborough) (Desulfovibrio vulgaris).